The sequence spans 288 residues: MHFLSPAKLNLFLQILGRREDDFHEIVTRYQAIAFGDQLSLSISSRDSLQVINACHLETPSNSIWKSVALFRRYTGITTPVSWRVVKQIPVGAGLAGGSSNAATALFALNQIFKTGLSDEEMRSLAEQIGMDTPFFFSTGAALGVARGEKIIALEESVSDRYVLYFSSEGVLTSRAFAVVQPSDCSSRKNLEYTQNDLEKPVFRLRLDLKEKKHWLESLWAELPVHIGLTGSGATLFVRYPEILEEDPSYAAQIQRAVTLSGGLLTSPIRRDPTAWYSIYSESALAAT.

Lys-8 is a catalytic residue. 90–100 (PVGAGLAGGSS) lines the ATP pocket. Asp-132 is an active-site residue.

It belongs to the GHMP kinase family. IspE subfamily.

It catalyses the reaction 4-CDP-2-C-methyl-D-erythritol + ATP = 4-CDP-2-C-methyl-D-erythritol 2-phosphate + ADP + H(+). It participates in isoprenoid biosynthesis; isopentenyl diphosphate biosynthesis via DXP pathway; isopentenyl diphosphate from 1-deoxy-D-xylulose 5-phosphate: step 3/6. Its function is as follows. Catalyzes the phosphorylation of the position 2 hydroxy group of 4-diphosphocytidyl-2C-methyl-D-erythritol. The polypeptide is 4-diphosphocytidyl-2-C-methyl-D-erythritol kinase (Chlamydia trachomatis serovar L2b (strain UCH-1/proctitis)).